The following is a 635-amino-acid chain: Biosynthetic arginine decarboxylase (635 aa).

Lys-100 is modified (N6-(pyridoxal phosphate)lysine). 282 to 292 (VDIGGGLGVDY) is a binding site for substrate.

This sequence belongs to the Orn/Lys/Arg decarboxylase class-II family. SpeA subfamily. Mg(2+) serves as cofactor. The cofactor is pyridoxal 5'-phosphate.

The enzyme catalyses L-arginine + H(+) = agmatine + CO2. It functions in the pathway amine and polyamine biosynthesis; agmatine biosynthesis; agmatine from L-arginine: step 1/1. Its function is as follows. Catalyzes the biosynthesis of agmatine from arginine. This is Biosynthetic arginine decarboxylase from Geobacter metallireducens (strain ATCC 53774 / DSM 7210 / GS-15).